A 345-amino-acid polypeptide reads, in one-letter code: Protein RecA (345 aa).

Residue 65–72 (GPESSGKT) coordinates ATP.

The protein belongs to the RecA family.

The protein localises to the cytoplasm. In terms of biological role, can catalyze the hydrolysis of ATP in the presence of single-stranded DNA, the ATP-dependent uptake of single-stranded DNA by duplex DNA, and the ATP-dependent hybridization of homologous single-stranded DNAs. It interacts with LexA causing its activation and leading to its autocatalytic cleavage. The protein is Protein RecA of Colwellia psychrerythraea (strain 34H / ATCC BAA-681) (Vibrio psychroerythus).